The primary structure comprises 444 residues: Glutamate-1-semialdehyde 2,1-aminomutase (444 aa).

N6-(pyridoxal phosphate)lysine is present on Lys267.

The protein belongs to the class-III pyridoxal-phosphate-dependent aminotransferase family. HemL subfamily. In terms of assembly, homodimer. Pyridoxal 5'-phosphate is required as a cofactor.

The protein localises to the cytoplasm. It catalyses the reaction (S)-4-amino-5-oxopentanoate = 5-aminolevulinate. Its pathway is porphyrin-containing compound metabolism; protoporphyrin-IX biosynthesis; 5-aminolevulinate from L-glutamyl-tRNA(Glu): step 2/2. The chain is Glutamate-1-semialdehyde 2,1-aminomutase from Xylella fastidiosa (strain 9a5c).